A 47-amino-acid chain; its full sequence is Antimicrobial peptide LCI (47 aa).

It is found in the secreted. Has antibacterial activity against X.oryzae pv oryzae and R.solanacearum, but not E.coli or P.carotovorum subsp carotovorum. May bind DNA or mRNA. This Bacillus subtilis protein is Antimicrobial peptide LCI.